The sequence spans 902 residues: MKRMLINATQQEELRVALVDGQRLYDLDIEHSGSEQKKSNIYKGKITRIEPSLEAAFVDYGEEKNGFLPLKEISKNYFPENHIETLGFNIKNVLQEGQEVIVQISKEERGTKGAALTTFISLAGSYLVLMPNSPKSGGISRRIEGNDRIALKELLTLLELPEEMSLIIRTAGAGKSIESLRWDLSLRLQHWKTIQIIAKSRTAPFLIHQESNIIVRAFRDYLRQDIGEILIDNPKILDLARKHITFLGRPDFVNKIKLYSGEVPLFSYFQIETQINSAFQRKVRLPSGGSIMVDSTEALTAIDINSSRSTSGTDIASTAFNTNLEAVDEISRQLRLRDLGGLIVIDFIDMSAISHQRAIENRLREIARDDRARIQIGQISRFGLLEMSRQRLSSSLGESSHHICPRCTGTGTIRDNESLSLSILRLIEEEALKENTYEVRAIVPVEIACYLLNEKRDAVHAIEKRQAGGKTIIVPSKKMKTPHYSVSRIRKSESKNYTRYGLSNIRQSKITSFLKKNLLKKKQKEILDVANFNFYDNCYNKIQEAQENILKKNNYNNILLKVLSNNRNFIFKMITWFKNSFFIKNMLITSDIFKKNTLKNTNNIFFKKKYSSLNKKNNNQKKRVILSKLFEANIENIPLKNKKLDTSSANYLYDNIERKKNITKKNDLIQKNIHENSYLKHVLMNRYNVINIINNNYIFYKIFNRTKIFKNQNTNNSFLKFSSVTSPIFIFSSVFSLELALGKVWIKYPIAILDETKKQKKLNRKQILHISSISETNTIVNKNNYSGIKKIKHETYSFKKYVKNNIQNQEVTQSQLIKRTKKRNVFILDKKNFLYKRTCNRKNKIHQSSAPITKISKQSDLNKKEKEFHYNLSMMKSSLRGKNSAGVHSATNFSNSPVSKLK.

The 81-residue stretch at 39-119 (SNIYKGKITR…GTKGAALTTF (81 aa)) folds into the S1 motif domain. 2 residues coordinate Mg(2+): Asp-303 and Asp-346. Residues Cys-404 and Cys-407 each coordinate Zn(2+). The required for zinc-mediated homotetramerization and catalytic activity stretch occupies residues 404–407 (CPRC). Residues 881–902 (GKNSAGVHSATNFSNSPVSKLK) are disordered. Residues 889-902 (SATNFSNSPVSKLK) show a composition bias toward polar residues.

This sequence belongs to the RNase E/G family. RNase E subfamily. As to quaternary structure, component of the RNA degradosome, which is a multiprotein complex involved in RNA processing and mRNA degradation. Within the RNA degradosome, RNase E assembles into a homotetramer formed by a dimer of dimers. The cofactor is Zn(2+). It depends on Mg(2+) as a cofactor.

It localises to the cytoplasm. The protein localises to the cell inner membrane. The catalysed reaction is Endonucleolytic cleavage of single-stranded RNA in A- and U-rich regions.. Endoribonuclease that plays a central role in RNA processing and decay. Required for the maturation of 5S and 16S rRNAs and the majority of tRNAs. Also involved in the degradation of most mRNAs. This chain is Ribonuclease E, found in Buchnera aphidicola subsp. Acyrthosiphon pisum (strain APS) (Acyrthosiphon pisum symbiotic bacterium).